The following is a 952-amino-acid chain: Eukaryotic translation initiation factor 3 subunit A (952 aa).

One can recognise a PCI domain in the interval 315-491 (HAERAGIVND…QTITFVSTPP (177 aa)). The stretch at 522 to 849 (DAFAAAIAQA…RRQAEKAAAT (328 aa)) forms a coiled coil. The segment covering 757 to 797 (EKVIKRKREEKERKLKEAREAEERKRKEEEEAAQKAEEEAR) has biased composition (basic and acidic residues). Positions 757–952 (EKVIKRKREE…RGMPSTRGGA (196 aa)) are disordered. Over residues 798–809 (AAAALEAEAAAA) the composition is skewed to low complexity. Residues 810-844 (EQRRAEREAQRQSDLERIRAQQEREEEALRRRQAE) show a composition bias toward basic and acidic residues. Low complexity-rich tracts occupy residues 856–878 (RPPA…GGPS) and 893–918 (GAPV…SNGP).

Belongs to the eIF-3 subunit A family. As to quaternary structure, component of the eukaryotic translation initiation factor 3 (eIF-3) complex.

The protein localises to the cytoplasm. Functionally, RNA-binding component of the eukaryotic translation initiation factor 3 (eIF-3) complex, which is involved in protein synthesis of a specialized repertoire of mRNAs and, together with other initiation factors, stimulates binding of mRNA and methionyl-tRNAi to the 40S ribosome. The eIF-3 complex specifically targets and initiates translation of a subset of mRNAs involved in cell proliferation. This is Eukaryotic translation initiation factor 3 subunit A from Cryptococcus neoformans var. neoformans serotype D (strain B-3501A) (Filobasidiella neoformans).